The primary structure comprises 273 residues: NADPH-dependent 7-cyano-7-deazaguanine reductase (273 aa).

Residue 81-83 (VES) coordinates substrate. 83–84 (SK) is a binding site for NADPH. Cys-179 serves as the catalytic Thioimide intermediate. Asp-186 (proton donor) is an active-site residue. Position 218 to 219 (218 to 219 (AE)) interacts with substrate. 247–248 (RG) serves as a coordination point for NADPH.

Belongs to the GTP cyclohydrolase I family. QueF type 2 subfamily. Homodimer.

The protein resides in the cytoplasm. The catalysed reaction is 7-aminomethyl-7-carbaguanine + 2 NADP(+) = 7-cyano-7-deazaguanine + 2 NADPH + 3 H(+). Its pathway is tRNA modification; tRNA-queuosine biosynthesis. Catalyzes the NADPH-dependent reduction of 7-cyano-7-deazaguanine (preQ0) to 7-aminomethyl-7-deazaguanine (preQ1). This is NADPH-dependent 7-cyano-7-deazaguanine reductase from Rickettsia akari (strain Hartford).